The following is a 718-amino-acid chain: Centromere/kinetochore protein zw10 (718 aa).

The protein belongs to the ZW10 family.

The protein resides in the cytoplasm. It is found in the nucleus. The protein localises to the chromosome. Its subcellular location is the centromere. It localises to the kinetochore. Its function is as follows. Required for accurate chromosome segregation. The polypeptide is Centromere/kinetochore protein zw10 (mit(1)15) (Drosophila pseudoobscura pseudoobscura (Fruit fly)).